Consider the following 189-residue polypeptide: Lutzicidin (189 aa).

An N-terminal signal peptide occupies residues 1–22 (MQGFFWKTLLVVALCGTSSSLA). The propeptide occupies 23–155 (HRPLSYGEAL…DEEKDRPKRV (133 aa)). 2 disulfide bridges follow: cysteine 79-cysteine 90 and cysteine 101-cysteine 118. The segment covering 125-148 (EEEEEDEEEQKAEVEKDEEKEDEE) has biased composition (acidic residues). The interval 125–152 (EEEEEDEEEQKAEVEKDEEKEDEEKDRP) is disordered.

The protein belongs to the cathelicidin family. As to expression, expressed by the venom gland.

The protein localises to the secreted. Its subcellular location is the target cell membrane. Its function is as follows. Potent antimicrobial peptide against Gram-negative and Gram-positive bacteria. Adopts an amphipathic alpha helical conformation, that may allow to partition into the target membrane. Low hemolytic activities have been observed on mammalian cells. The polypeptide is Lutzicidin (Bothrops lutzi (Sertao lancehead)).